The sequence spans 470 residues: Uronate isomerase (470 aa).

This sequence belongs to the metallo-dependent hydrolases superfamily. Uronate isomerase family.

It carries out the reaction D-glucuronate = D-fructuronate. The catalysed reaction is aldehydo-D-galacturonate = keto-D-tagaturonate. Its pathway is carbohydrate metabolism; pentose and glucuronate interconversion. This chain is Uronate isomerase, found in Salmonella heidelberg (strain SL476).